The following is a 204-amino-acid chain: MTLGIDEAGRGCLAGSLFVAGVACSEKTALEFLKMGLKDSKKLSQKKRFFLEDKIKTHGEVGFFVVKKSAEAIDSLGLGACLKLAIEEILENGCSLANEIKIDGNTAFGLNKRYPNIQTIIKGDETIAQIAMASVLAKAAKDREMLELHALFKEYGWDKNCGYGTKQHIEAIIKLGATPFHRHSFTLKNRILNPKLLEVEQRLV.

Residues 1–197 (MTLGIDEAGR…KNRILNPKLL (197 aa)) enclose the RNase H type-2 domain. A divalent metal cation contacts are provided by Asp-6, Glu-7, and Asp-103.

This sequence belongs to the RNase HII family. It depends on Mn(2+) as a cofactor. Mg(2+) is required as a cofactor.

It localises to the cytoplasm. It catalyses the reaction Endonucleolytic cleavage to 5'-phosphomonoester.. Endonuclease that specifically degrades the RNA of RNA-DNA hybrids. The chain is Ribonuclease HII from Helicobacter pylori (strain HPAG1).